A 401-amino-acid chain; its full sequence is 4-hydroxy-3-methylbut-2-enyl diphosphate reductase (401 aa).

C66 contacts [4Fe-4S] cluster. H96 serves as a coordination point for (2E)-4-hydroxy-3-methylbut-2-enyl diphosphate. A dimethylallyl diphosphate-binding site is contributed by H96. H96 provides a ligand contact to isopentenyl diphosphate. C157 is a binding site for [4Fe-4S] cluster. H185 is a binding site for (2E)-4-hydroxy-3-methylbut-2-enyl diphosphate. H185 contacts dimethylallyl diphosphate. H185 contacts isopentenyl diphosphate. Catalysis depends on E187, which acts as the Proton donor. Residue T250 participates in (2E)-4-hydroxy-3-methylbut-2-enyl diphosphate binding. [4Fe-4S] cluster is bound at residue C288. (2E)-4-hydroxy-3-methylbut-2-enyl diphosphate contacts are provided by S317, S318, N319, and S379. Dimethylallyl diphosphate is bound by residues S317, S318, N319, and S379. S317, S318, N319, and S379 together coordinate isopentenyl diphosphate.

Belongs to the IspH family. [4Fe-4S] cluster is required as a cofactor.

The catalysed reaction is isopentenyl diphosphate + 2 oxidized [2Fe-2S]-[ferredoxin] + H2O = (2E)-4-hydroxy-3-methylbut-2-enyl diphosphate + 2 reduced [2Fe-2S]-[ferredoxin] + 2 H(+). The enzyme catalyses dimethylallyl diphosphate + 2 oxidized [2Fe-2S]-[ferredoxin] + H2O = (2E)-4-hydroxy-3-methylbut-2-enyl diphosphate + 2 reduced [2Fe-2S]-[ferredoxin] + 2 H(+). It functions in the pathway isoprenoid biosynthesis; dimethylallyl diphosphate biosynthesis; dimethylallyl diphosphate from (2E)-4-hydroxy-3-methylbutenyl diphosphate: step 1/1. The protein operates within isoprenoid biosynthesis; isopentenyl diphosphate biosynthesis via DXP pathway; isopentenyl diphosphate from 1-deoxy-D-xylulose 5-phosphate: step 6/6. Its function is as follows. Catalyzes the conversion of 1-hydroxy-2-methyl-2-(E)-butenyl 4-diphosphate (HMBPP) into a mixture of isopentenyl diphosphate (IPP) and dimethylallyl diphosphate (DMAPP). Acts in the terminal step of the DOXP/MEP pathway for isoprenoid precursor biosynthesis. The chain is 4-hydroxy-3-methylbut-2-enyl diphosphate reductase from Trichodesmium erythraeum (strain IMS101).